The following is a 321-amino-acid chain: D-alanine--D-alanine ligase (321 aa).

In terms of domain architecture, ATP-grasp spans 121–315; it reads RSWFLTNNIN…FTNLIEEIIK (195 aa). 147–199 provides a ligand contact to ATP; the sequence is PMKRPYVIKPLTQGSSIGVEVIFAEDNFNFADYDFPYGDQVIIEQYIKGRELQ. Mg(2+)-binding residues include E268, E282, and N284.

The protein belongs to the D-alanine--D-alanine ligase family. Requires Mg(2+) as cofactor. It depends on Mn(2+) as a cofactor.

The protein resides in the cytoplasm. The enzyme catalyses 2 D-alanine + ATP = D-alanyl-D-alanine + ADP + phosphate + H(+). It functions in the pathway cell wall biogenesis; peptidoglycan biosynthesis. Functionally, cell wall formation. This chain is D-alanine--D-alanine ligase, found in Rickettsia massiliae (strain Mtu5).